A 56-amino-acid chain; its full sequence is MFTVFLLVVLATTVVSFTSDRASDGGNAAMSDLIALTIKGCCSHPPCFLNNPDYCG.

The N-terminal stretch at 1 to 16 (MFTVFLLVVLATTVVS) is a signal peptide. The propeptide occupies 17–39 (FTSDRASDGGNAAMSDLIALTIK). Intrachain disulfides connect Cys41/Cys47 and Cys42/Cys55. Positions 43–45 (SHP) are ser-Xaa-Pro motif, crucial for potent interaction with nAChR. The residue at position 55 (Cys55) is a Cysteine amide.

It belongs to the conotoxin A superfamily. Post-translationally, non-native isomers 'ribbon' (with disulfide connectivity C1-C4; C2-C3) and 'beads' (with disulfide connectivity C1-C2; C3-C4) also inhibit high voltage-activated (HVA) calcium channel currents in rat DRG neurons (20-30% inhibition at 1 uM toxin). Expressed by the venom duct.

It is found in the secreted. Functionally, alpha-conotoxins act on postsynaptic membranes, they bind to the nicotinic acetylcholine receptors (nAChR) and thus inhibit them. This toxin inhibits human alpha-7/CHRNA7 and alpha-9-alpha-10/CHRNA9/CHRNA10 AChR (complete inhibition at 3 uM of toxin). In addition, this toxin inhibits high voltage-activated (HVA) calcium channel currents in rat DRG neurons (22% inhibition at 1 uM toxin) probably by activating GABA(B) receptors (GABBR1 and/or GABBR2). This chain is Alpha-conotoxin Pn1.2, found in Conus pennaceus (Feathered cone).